Reading from the N-terminus, the 931-residue chain is Translation initiation factor IF-2 (931 aa).

Residues 32-310 (KSASSTVEPP…SSKARKNRLA (279 aa)) are disordered. Residues 50 to 59 (FASSGQGNAS) are compositionally biased toward polar residues. Residues 82 to 96 (PAAPSAPKPAAPAAP) show a composition bias toward pro residues. Over residues 156 to 168 (GNAPQGGNNANGA) the composition is skewed to low complexity. Gly residues-rich tracts occupy residues 217–238 (RPGQ…GGAK), 248–271 (GQGG…GFQG), and 281–298 (ARGG…GRQG). The region spanning 424–596 (PRPPVVTVMG…VLLTADAELD (173 aa)) is the tr-type G domain. The tract at residues 433-440 (GHVDHGKT) is G1. 433-440 (GHVDHGKT) lines the GTP pocket. The G2 stretch occupies residues 458 to 462 (GITQR). A G3 region spans residues 483–486 (DTPG). Residues 483–487 (DTPGH) and 537–540 (NKID) each bind GTP. The interval 537–540 (NKID) is G4. A G5 region spans residues 573 to 575 (SAK).

Belongs to the TRAFAC class translation factor GTPase superfamily. Classic translation factor GTPase family. IF-2 subfamily.

Its subcellular location is the cytoplasm. In terms of biological role, one of the essential components for the initiation of protein synthesis. Protects formylmethionyl-tRNA from spontaneous hydrolysis and promotes its binding to the 30S ribosomal subunits. Also involved in the hydrolysis of GTP during the formation of the 70S ribosomal complex. The protein is Translation initiation factor IF-2 of Bifidobacterium adolescentis (strain ATCC 15703 / DSM 20083 / NCTC 11814 / E194a).